Here is a 171-residue protein sequence, read N- to C-terminus: Mitochondrial import inner membrane translocase subunit Tim17-A (171 aa).

Cys9 and Cys78 are disulfide-bonded. The next 3 membrane-spanning stretches (helical) occupy residues 17–37 (CGGA…IKGF), 63–77 (GGSF…SMID), and 113–133 (VGSA…GILL). The segment at 144–171 (GPQFAEDPSQLPSTQLPSSPFGDYRQYQ) is disordered. Residues 151–163 (PSQLPSTQLPSSP) show a composition bias toward low complexity.

This sequence belongs to the Tim17/Tim22/Tim23 family. In terms of assembly, component of the TIM23 complex at least composed of TIMM23, TIMM17 (TIMM17A or TIMM17B) and TIMM50. The complex interacts with the TIMM44 component of the PAM complex and with DNAJC15. In terms of processing, degraded by YMEL1 downstream of the integrated stress response (ISR).

It localises to the mitochondrion inner membrane. In terms of biological role, essential component of the TIM23 complex, a complex that mediates the translocation of transit peptide-containing proteins across the mitochondrial inner membrane. In Homo sapiens (Human), this protein is Mitochondrial import inner membrane translocase subunit Tim17-A (TIMM17A).